The chain runs to 187 residues: Adenylate kinase (187 aa).

ATP is bound at residue 11 to 16 (GAGKGT). The NMP stretch occupies residues 31–60 (STGDILREAVKNQTAMGIEAKRYMDAGDLV). Residues Thr-32, Arg-37, 58 to 60 (DLV), 86 to 89 (GFPR), and Gln-93 each bind AMP. Positions 127–137 (GRAEIEGRADD) are LID. Residue Arg-128 coordinates ATP. Arg-134 and Arg-145 together coordinate AMP. Position 173 (Gly-173) interacts with ATP.

It belongs to the adenylate kinase family. In terms of assembly, monomer.

It is found in the cytoplasm. It catalyses the reaction AMP + ATP = 2 ADP. Its pathway is purine metabolism; AMP biosynthesis via salvage pathway; AMP from ADP: step 1/1. Functionally, catalyzes the reversible transfer of the terminal phosphate group between ATP and AMP. Plays an important role in cellular energy homeostasis and in adenine nucleotide metabolism. In Leptospira interrogans serogroup Icterohaemorrhagiae serovar copenhageni (strain Fiocruz L1-130), this protein is Adenylate kinase.